A 732-amino-acid polypeptide reads, in one-letter code: Catalase-peroxidase (732 aa).

Positions 97–220 (WHSAGTYRTG…LAAVQMGLIY (124 aa)) form a cross-link, tryptophyl-tyrosyl-methioninium (Trp-Tyr) (with M-246). Histidine 98 (proton acceptor) is an active-site residue. A cross-link (tryptophyl-tyrosyl-methioninium (Tyr-Met) (with W-97)) is located at residues 220–246 (YVNPEGPDGKPDPVAAGKDIRETFGRM). Histidine 261 is a heme b binding site.

The protein belongs to the peroxidase family. Peroxidase/catalase subfamily. As to quaternary structure, homodimer or homotetramer. The cofactor is heme b. Formation of the three residue Trp-Tyr-Met cross-link is important for the catalase, but not the peroxidase activity of the enzyme.

The enzyme catalyses H2O2 + AH2 = A + 2 H2O. The catalysed reaction is 2 H2O2 = O2 + 2 H2O. Functionally, bifunctional enzyme with both catalase and broad-spectrum peroxidase activity. The sequence is that of Catalase-peroxidase from Chlorobium phaeobacteroides (strain BS1).